Reading from the N-terminus, the 375-residue chain is tRNA-specific 2-thiouridylase MnmA (375 aa).

ATP-binding positions include 12–19 (GMSGGVDS) and M38. The tract at residues 98-100 (NPD) is interaction with target base in tRNA. C103 acts as the Nucleophile in catalysis. C103 and C200 are joined by a disulfide. An ATP-binding site is contributed by G127. The segment at 150–152 (KDQ) is interaction with tRNA. C200 acts as the Cysteine persulfide intermediate in catalysis. Residues 312–313 (RY) are interaction with tRNA.

The protein belongs to the MnmA/TRMU family.

The protein localises to the cytoplasm. It carries out the reaction S-sulfanyl-L-cysteinyl-[protein] + uridine(34) in tRNA + AH2 + ATP = 2-thiouridine(34) in tRNA + L-cysteinyl-[protein] + A + AMP + diphosphate + H(+). Catalyzes the 2-thiolation of uridine at the wobble position (U34) of tRNA, leading to the formation of s(2)U34. This is tRNA-specific 2-thiouridylase MnmA from Levilactobacillus brevis (strain ATCC 367 / BCRC 12310 / CIP 105137 / JCM 1170 / LMG 11437 / NCIMB 947 / NCTC 947) (Lactobacillus brevis).